The primary structure comprises 3919 residues: Intermembrane lipid transfer protein Vps13D (3919 aa).

The Chorein N-terminal domain maps to 4-114 (DLITWVLNTY…QDLEYKLAVL (111 aa)). The interval 706-736 (TSDDDETYLTPCSTPPASEKSGSESPTLLEN) is disordered. The 43-residue stretch at 2292–2334 (KADSDLEKAAPLVAMGFEISDCLYAMQINNWRINDAAIWLSQQ) folds into the UBA domain. Residues 2837-3113 (ELYISAPVWI…YVMDDPLGQQ (277 aa)) form the SHR-BD domain. The segment at 3749–3768 (VRETSRDSHRNAPERKRLPR) is disordered. Basic and acidic residues predominate over residues 3751–3764 (ETSRDSHRNAPERK).

This sequence belongs to the VPS13 family. As to expression, expressed in intestinal cells (at protein level).

It localises to the cytoplasm. Its subcellular location is the lysosome. Functionally, mediates the transfer of lipids between membranes at organelle contact sites. Functions in promoting mitochondrial clearance by mitochondrial autophagy (mitophagy), also possibly by positively regulating mitochondrial fission. Mitophagy plays an important role in regulating cell health and mitochondrial size and homeostasis. In Drosophila melanogaster (Fruit fly), this protein is Intermembrane lipid transfer protein Vps13D.